Consider the following 409-residue polypeptide: Dipeptidase 1 (409 aa).

Residues 1–16 (MWTSWWLWPLVAVCAA) form the signal peptide. Zn(2+)-binding residues include His-36 and Asp-38. N-linked (GlcNAc...) asparagine glycosylation occurs at Asn-57. A disulfide bond links Cys-87 and Cys-170. Zn(2+) is bound at residue Glu-141. His-168 is a substrate binding site. 2 residues coordinate Zn(2+): His-214 and His-235. Cys-242 and Cys-274 are joined by a disulfide. Arg-246 lines the substrate pocket. N-linked (GlcNAc...) asparagine glycosylation occurs at Asn-279. Residue Asp-304 participates in substrate binding. Residue Ser-384 is the site of GPI-anchor amidated serine attachment. A propeptide spans 385 to 409 (AAPSLHLPPGSLLASLVPLLLLSLP) (removed in mature form).

Belongs to the metallo-dependent hydrolases superfamily. Peptidase M19 family. Homodimer; disulfide-linked. The cofactor is Zn(2+).

The protein localises to the apical cell membrane. The protein resides in the cell projection. It is found in the microvillus membrane. Its subcellular location is the cell membrane. It carries out the reaction an L-aminoacyl-L-amino acid + H2O = 2 an L-alpha-amino acid. The enzyme catalyses leukotriene D4 + H2O = leukotriene E4 + glycine. It catalyses the reaction L-cystine-bis-glycine + 2 H2O = L-cystine + 2 glycine. The catalysed reaction is a beta-lactam + H2O = a substituted beta-amino acid. It carries out the reaction glycyldehydrophenylalanine + H2O = 2,3-didehydrophenylalanine + glycine. With respect to regulation, inhibited by L-penicillamine. Inhibited by cilastatin. Hydrolyzes a wide range of dipeptides. Hydrolyzes the conversion of leukotriene D4 to leukotriene E4. Hydrolyzes cystinyl-bis-glycine (cys-bis-gly) formed during glutathione degradation. Also possesses beta lactamase activity and hydrolytically inactivates beta-lactam antibiotics. Its function is as follows. Independently of its dipeptidase activity, acts as an adhesion receptor for neutrophil recruitment from bloodstream into inflamed lungs and liver. This Sus scrofa (Pig) protein is Dipeptidase 1 (DPEP1).